We begin with the raw amino-acid sequence, 881 residues long: Alanine--tRNA ligase (881 aa).

Residues histidine 564, histidine 568, cysteine 673, and histidine 677 each coordinate Zn(2+). Residues 848-867 (GQGGGGRPDMAQAGGPDGDK) form a disordered region.

Belongs to the class-II aminoacyl-tRNA synthetase family. The cofactor is Zn(2+).

It is found in the cytoplasm. The catalysed reaction is tRNA(Ala) + L-alanine + ATP = L-alanyl-tRNA(Ala) + AMP + diphosphate. Its function is as follows. Catalyzes the attachment of alanine to tRNA(Ala) in a two-step reaction: alanine is first activated by ATP to form Ala-AMP and then transferred to the acceptor end of tRNA(Ala). Also edits incorrectly charged Ser-tRNA(Ala) and Gly-tRNA(Ala) via its editing domain. This chain is Alanine--tRNA ligase, found in Hyphomonas neptunium (strain ATCC 15444).